A 364-amino-acid chain; its full sequence is Probable dual-specificity RNA methyltransferase RlmN (364 aa).

The Proton acceptor role is filled by E107. In terms of domain architecture, Radical SAM core spans 113–346; sequence HNYGNSVCVT…VTIRREHGHD (234 aa). Cysteines 120 and 351 form a disulfide. C127, C131, and C134 together coordinate [4Fe-4S] cluster. S-adenosyl-L-methionine contacts are provided by residues 177–178, S209, 232–234, and N308; these read GE and SLH. C351 acts as the S-methylcysteine intermediate in catalysis.

Belongs to the radical SAM superfamily. RlmN family. Requires [4Fe-4S] cluster as cofactor.

The protein resides in the cytoplasm. It carries out the reaction adenosine(2503) in 23S rRNA + 2 reduced [2Fe-2S]-[ferredoxin] + 2 S-adenosyl-L-methionine = 2-methyladenosine(2503) in 23S rRNA + 5'-deoxyadenosine + L-methionine + 2 oxidized [2Fe-2S]-[ferredoxin] + S-adenosyl-L-homocysteine. The catalysed reaction is adenosine(37) in tRNA + 2 reduced [2Fe-2S]-[ferredoxin] + 2 S-adenosyl-L-methionine = 2-methyladenosine(37) in tRNA + 5'-deoxyadenosine + L-methionine + 2 oxidized [2Fe-2S]-[ferredoxin] + S-adenosyl-L-homocysteine. Its function is as follows. Specifically methylates position 2 of adenine 2503 in 23S rRNA and position 2 of adenine 37 in tRNAs. This chain is Probable dual-specificity RNA methyltransferase RlmN, found in Geobacillus thermodenitrificans (strain NG80-2).